The sequence spans 219 residues: Pyridoxal 5'-phosphate synthase subunit PDX2 (219 aa).

52–54 (GES) contacts L-glutamine. The Nucleophile role is filled by Cys-87. L-glutamine-binding positions include Arg-121 and 153–154 (IR). Residues His-196 and Glu-198 each act as charge relay system in the active site.

Belongs to the glutaminase PdxT/SNO family. In terms of assembly, in the presence of Pdx1, forms a dodecamer of heterodimers. Only shows activity in the heterodimer.

The protein localises to the cytoplasm. It carries out the reaction aldehydo-D-ribose 5-phosphate + D-glyceraldehyde 3-phosphate + L-glutamine = pyridoxal 5'-phosphate + L-glutamate + phosphate + 3 H2O + H(+). The enzyme catalyses L-glutamine + H2O = L-glutamate + NH4(+). It participates in cofactor biosynthesis; pyridoxal 5'-phosphate biosynthesis. In terms of biological role, catalyzes the hydrolysis of glutamine to glutamate and ammonia as part of the biosynthesis of pyridoxal 5'-phosphate. The resulting ammonia molecule is channeled to the active site of Pdx1. This Plasmodium falciparum (isolate 3D7) protein is Pyridoxal 5'-phosphate synthase subunit PDX2.